The chain runs to 417 residues: Probable tubulin polyglutamylase ttll-9 (417 aa).

A TTL domain is found at 23–372 (QRKKKILFKC…EKKLIGNENE (350 aa)). ATP-binding positions include 188 to 191 (QCYV), Lys-201, and Asp-203.

It belongs to the tubulin--tyrosine ligase family. In terms of tissue distribution, expressed in head sensory neurons.

Functionally, polyglutamylase that forms polyglutamate side chains on tubulin. Acts when complexed with other proteins. Appears to be dispensable for polar spindle formation in dividing embryonic cells, for cilia-dependent osmotic avoidance and for male mating behavior. Probably by regulating microtubule stability via the glutamylation of tubulin, regulates PLM axon developmental growth. In Caenorhabditis elegans, this protein is Probable tubulin polyglutamylase ttll-9.